Reading from the N-terminus, the 257-residue chain is Ribonuclease HII (257 aa).

The RNase H type-2 domain occupies 72–257 (TYIAGIDEVG…FAPIKDMIQK (186 aa)). A divalent metal cation contacts are provided by Asp-78, Glu-79, and Asp-170.

Belongs to the RNase HII family. The cofactor is Mn(2+). Requires Mg(2+) as cofactor.

It is found in the cytoplasm. The catalysed reaction is Endonucleolytic cleavage to 5'-phosphomonoester.. Functionally, endonuclease that specifically degrades the RNA of RNA-DNA hybrids. The chain is Ribonuclease HII from Bacillus cereus (strain ATCC 14579 / DSM 31 / CCUG 7414 / JCM 2152 / NBRC 15305 / NCIMB 9373 / NCTC 2599 / NRRL B-3711).